The following is a 389-amino-acid chain: Large envelope protein (389 aa).

Position 1 is an N-acetylmethionine (Met-1). A lipid anchor (N-myristoyl glycine; by host) is attached at Gly-2. The tract at residues 2–108 is pre-S1; that stretch reads GQNLSVSNPL…PPLRDTHPQA (107 aa). The tract at residues 2 to 163 is pre-S; the sequence is GQNLSVSNPL…FSRTGDPAPN (162 aa). Topologically, residues 2 to 170 are virion surface; in external conformation; it reads GQNLSVSNPL…APNMENITSG (169 aa). Residues 2–242 lie on the Intravirion; in internal conformation side of the membrane; sequence GQNLSVSNPL…PGYRWMCLRR (241 aa). The segment at 79–99 is disordered; that stretch reads ALPPPAATNRQSGRQPTPISP. The interval 109–163 is pre-S2; it reads MKWNSTVFHQTLQDPRVRGLYFPVGGSSSGTVNPVPTTASHISSIFSRTGDPAPN. A helical membrane pass occupies residues 171 to 191; it reads FLGPLLVLQAGFFLLTKILTI. Residues 192–242 are Intravirion; in external conformation-facing; it reads PQSLDSWWTSLNFLGGAPVCPGQNSQSPTSNHSPTSCPPICPGYRWMCLRR. The chain crosses the membrane as a helical span at residues 243 to 263; sequence FIIFLFILLLCLIFLLVLLDY. Topologically, residues 264–337 are virion surface; it reads QGMLPVCPLL…WASVRFSWLS (74 aa). N-linked (GlcNAc...) asparagine; by host glycosylation occurs at Asn-309. Residues 338 to 358 traverse the membrane as a helical segment; it reads LLAPFVQWFAGLSPTAWLLVI. The Intravirion portion of the chain corresponds to 359–364; sequence WMIWYW. The helical transmembrane segment at 365–387 threads the bilayer; the sequence is GPNLYNILNPFIPLLPIFFCLWV. Topologically, residues 388–389 are virion surface; the sequence is YI.

This sequence belongs to the orthohepadnavirus major surface antigen family. In its internal form (Li-HBsAg), interacts with the capsid protein and with the isoform S. Interacts with host chaperone CANX. As to quaternary structure, associates with host chaperone CANX through its pre-S2 N glycan; this association may be essential for isoform M proper secretion. In terms of assembly, interacts with isoform L. Interacts with the antigens of satellite virus HDV (HDVAgs); this interaction is required for encapsidation of HDV genomic RNA. Post-translationally, isoform M is N-terminally acetylated by host at a ratio of 90%, and N-glycosylated by host at the pre-S2 region. In terms of processing, myristoylated.

Its subcellular location is the virion membrane. Functionally, the large envelope protein exists in two topological conformations, one which is termed 'external' or Le-HBsAg and the other 'internal' or Li-HBsAg. In its external conformation the protein attaches the virus to cell receptors and thereby initiating infection. This interaction determines the species specificity and liver tropism. This attachment induces virion internalization predominantly through caveolin-mediated endocytosis. The large envelope protein also assures fusion between virion membrane and endosomal membrane. In its internal conformation the protein plays a role in virion morphogenesis and mediates the contact with the nucleocapsid like a matrix protein. The middle envelope protein plays an important role in the budding of the virion. It is involved in the induction of budding in a nucleocapsid independent way. In this process the majority of envelope proteins bud to form subviral lipoprotein particles of 22 nm of diameter that do not contain a nucleocapsid. This is Large envelope protein from Hylobatidae (gibbons).